A 347-amino-acid polypeptide reads, in one-letter code: Secretory carrier-associated membrane protein 3 (347 aa).

The segment at 1-88 (MAQSRDGGNP…EPKNYGSYST (88 aa)) is disordered. Residues 1–170 (MAQSRDGGNP…QKTVSTMYYL (170 aa)) lie on the Cytoplasmic side of the membrane. Phosphoserine is present on Ser-32. A Phosphothreonine modification is found at Thr-37. Residues Tyr-41 and Tyr-53 each carry the phosphotyrosine modification. Residues 49-66 (PPPAYEPPAPAPLPPPSA) show a composition bias toward pro residues. Residues Ser-72 and Ser-76 each carry the phosphoserine modification. Tyr-83 bears the Phosphotyrosine mark. At Ser-85 the chain carries Phosphoserine. 4 consecutive transmembrane segments (helical) span residues 171–191 (WMCSTLALLLNFLACLASFCV), 197–217 (AGFGLSILWVLLFTPCSFVCW), 247–267 (FVLQAIGIPGWGFSGWISALV), and 277–297 (VLMLLVALLFTGIAVLGIVML). At 298-347 (KRIHSLYRRTGASFQKAQQEFAAGVFSNPAVRTAAANAAAGAAENAFRAP) the chain is on the cytoplasmic side. Lys-313 is covalently cross-linked (Glycyl lysine isopeptide (Lys-Gly) (interchain with G-Cter in SUMO1)).

The protein belongs to the SCAMP family. Interacts with NEDD4, NEDD4L and TSG101. Interacts with RNF126. In terms of processing, monoubiquitinated. As to expression, widely expressed, with highest expression in heart and skeletal muscle.

It is found in the membrane. In terms of biological role, functions in post-Golgi recycling pathways. Acts as a recycling carrier to the cell surface. The chain is Secretory carrier-associated membrane protein 3 (SCAMP3) from Homo sapiens (Human).